A 305-amino-acid chain; its full sequence is GMP synthase [glutamine-hydrolyzing] subunit B (305 aa).

One can recognise a GMPS ATP-PPase domain in the interval 2–185; the sequence is VNVDEFIEEA…LDLEEIISER (184 aa). ATP is bound at residue 29–35; that stretch reads SGGVDSS.

In terms of assembly, heterodimer composed of a glutamine amidotransferase subunit (A) and a GMP-binding subunit (B).

It catalyses the reaction XMP + L-glutamine + ATP + H2O = GMP + L-glutamate + AMP + diphosphate + 2 H(+). It participates in purine metabolism; GMP biosynthesis; GMP from XMP (L-Gln route): step 1/1. In terms of biological role, catalyzes the synthesis of GMP from XMP. This is GMP synthase [glutamine-hydrolyzing] subunit B from Haloarcula marismortui (strain ATCC 43049 / DSM 3752 / JCM 8966 / VKM B-1809) (Halobacterium marismortui).